Reading from the N-terminus, the 233-residue chain is Probable chemoreceptor glutamine deamidase CheD (233 aa).

Belongs to the CheD family.

The catalysed reaction is L-glutaminyl-[protein] + H2O = L-glutamyl-[protein] + NH4(+). Functionally, probably deamidates glutamine residues to glutamate on methyl-accepting chemotaxis receptors (MCPs), playing an important role in chemotaxis. In Vibrio cholerae serotype O1 (strain ATCC 39315 / El Tor Inaba N16961), this protein is Probable chemoreceptor glutamine deamidase CheD.